We begin with the raw amino-acid sequence, 603 residues long: Glutathione-regulated potassium-efflux system protein KefB (603 aa).

A run of 13 helical transmembrane segments spans residues 5–25 (ALLTAGVLFLFVAVVAVPIAA), 29–49 (IGAVLGYLIAGIAIGPWGLGF), 53–73 (VEAILHFSELGVVFLMFIIGL), 87–107 (IFGVGAAQVGLSALILGGALY), 115–135 (SALIGGVGLAMSSTAMALQLM), 152–172 (VLLFQDLAVIPALALIPILAG), 180–202 (WERIGLKVAAFLGMLIGGRYLVR), 207–227 (FIAASGVREVFTAAALLLVLG), 230–250 (LFMEALGLSMALGTFIAGILL), 268–288 (GLLLGLFFISVGMALNLGILY), 291–311 (IVKIMIAVLVLVAVKGAVLYF), 326–346 (FAGVLSQGGEFAFVLFSAAAS), and 356–376 (PLLLVTVTLSMMTTPLLMQVI). Positions 400–521 (EPQVIVVGFG…VRHFSRETFS (122 aa)) constitute an RCK N-terminal domain.

Belongs to the monovalent cation:proton antiporter 2 (CPA2) transporter (TC 2.A.37) family. KefB subfamily. In terms of assembly, interacts with the regulatory subunit KefG.

The protein resides in the cell inner membrane. Its function is as follows. Pore-forming subunit of a potassium efflux system that confers protection against electrophiles. Catalyzes K(+)/H(+) antiport. This chain is Glutathione-regulated potassium-efflux system protein KefB, found in Pectobacterium atrosepticum (strain SCRI 1043 / ATCC BAA-672) (Erwinia carotovora subsp. atroseptica).